A 322-amino-acid polypeptide reads, in one-letter code: tRNA U34 carboxymethyltransferase (322 aa).

Carboxy-S-adenosyl-L-methionine-binding positions include lysine 92, tryptophan 106, lysine 111, glycine 131, aspartate 153–serine 155, valine 181–glutamate 182, methionine 196, tyrosine 200, and arginine 315.

It belongs to the class I-like SAM-binding methyltransferase superfamily. CmoB family. As to quaternary structure, homotetramer.

It carries out the reaction carboxy-S-adenosyl-L-methionine + 5-hydroxyuridine(34) in tRNA = 5-carboxymethoxyuridine(34) in tRNA + S-adenosyl-L-homocysteine + H(+). In terms of biological role, catalyzes carboxymethyl transfer from carboxy-S-adenosyl-L-methionine (Cx-SAM) to 5-hydroxyuridine (ho5U) to form 5-carboxymethoxyuridine (cmo5U) at position 34 in tRNAs. This chain is tRNA U34 carboxymethyltransferase, found in Pseudoalteromonas translucida (strain TAC 125).